The following is a 79-amino-acid chain: Small ribosomal subunit protein bS18 (79 aa).

The protein belongs to the bacterial ribosomal protein bS18 family. Part of the 30S ribosomal subunit. Forms a tight heterodimer with protein bS6.

Its function is as follows. Binds as a heterodimer with protein bS6 to the central domain of the 16S rRNA, where it helps stabilize the platform of the 30S subunit. This chain is Small ribosomal subunit protein bS18, found in Salinispora arenicola (strain CNS-205).